A 290-amino-acid chain; its full sequence is NH(3)-dependent NAD(+) synthetase (290 aa).

33 to 40 (GVSGGVDS) serves as a coordination point for ATP. Aspartate 39 provides a ligand contact to Mg(2+). Arginine 154 lines the deamido-NAD(+) pocket. ATP is bound at residue threonine 174. Glutamate 179 lines the Mg(2+) pocket. Lysine 187 and aspartate 194 together coordinate deamido-NAD(+). 2 residues coordinate ATP: lysine 203 and serine 225.

Belongs to the NAD synthetase family. In terms of assembly, homodimer.

The enzyme catalyses deamido-NAD(+) + NH4(+) + ATP = AMP + diphosphate + NAD(+) + H(+). Its pathway is cofactor biosynthesis; NAD(+) biosynthesis; NAD(+) from deamido-NAD(+) (ammonia route): step 1/1. In terms of biological role, catalyzes the ATP-dependent amidation of deamido-NAD to form NAD. Uses ammonia as a nitrogen source. The sequence is that of NH(3)-dependent NAD(+) synthetase from Thermotoga neapolitana (strain ATCC 49049 / DSM 4359 / NBRC 107923 / NS-E).